Here is a 280-residue protein sequence, read N- to C-terminus: Cell envelope integrity protein EipB (280 aa).

An N-terminal signal peptide occupies residues 1–24; the sequence is MRFVRIAAAASGATVFMWAGFAGA. Cys69 and Cys278 are joined by a disulfide.

In terms of assembly, monomer.

Its subcellular location is the periplasm. Functions in the periplasm to maintain cell envelope integrity. The polypeptide is Cell envelope integrity protein EipB (Brucella abortus (strain 2308)).